Reading from the N-terminus, the 563-residue chain is Beta-catenin-like protein 1 (563 aa).

Methionine 1 is modified (N-acetylmethionine). The segment at 1 to 81 is disordered; it reads MDVGELLSYQ…EEEEPLDESS (81 aa). Residues 16–33 carry the Nuclear localization signal motif; sequence KRPRDDEEEELKTRRKQT. The segment covering 34–45 has biased composition (basic and acidic residues); sequence GPRERGRYREDE. The span at 66–78 shows a compositional bias: acidic residues; sequence DGEEEEEEEEPLD. 2 HEAT repeats span residues 79-129 and 134-176; these read ESSV…VVAT and YHLL…TLHE. N6-acetyllysine is present on lysine 91. Residues 130-140 carry the Nuclear export signal (NES) motif; the sequence is MPDLYHLLVEL. 5 ARM repeats span residues 178 to 228, 229 to 273, 274 to 323, 325 to 363, and 364 to 417; these read EEGA…MAEF, RPEM…LQDN, DENR…CLML, SNRE…AMIG, and PEGA…LLRN. Serine 389 carries the phosphoserine modification. A coiled-coil region spans residues 476-540; it reads DMEDEFYLRR…HIIKEYAENI (65 aa). Residue serine 545 is modified to Phosphoserine.

In terms of assembly, component of the PRP19-CDC5L splicing complex composed of a core complex comprising a homotetramer of PRPF19, CDC5L, PLRG1 and BCAS2, and at least three less stably associated proteins CTNNBL1, CWC15 and HSPA8. Interacts directly with CWC15 and CDC5L in the complex. Interacts with AICDA; the interaction is important for the antibody diversification activity of AICDA. Interacts with PRPF31 (via its NLS). Interacts (via its N-terminal NLS) with KPNA1 and KPNA2.

Its subcellular location is the nucleus. Its function is as follows. Component of the PRP19-CDC5L complex that forms an integral part of the spliceosome and is required for activating pre-mRNA splicing. Participates in AID/AICDA-mediated somatic hypermutation (SHM) and class-switch recombination (CSR), 2 processes resulting in the production of high-affinity, mutated isotype-switched antibodies. The polypeptide is Beta-catenin-like protein 1 (Ctnnbl1) (Rattus norvegicus (Rat)).